Here is a 493-residue protein sequence, read N- to C-terminus: Leucine-rich repeat-containing protein 14 (493 aa).

The LRR 1; degenerate repeat unit spans residues lysine 111 to threonine 146. An LRR 2; degenerate repeat occupies arginine 194–aspartate 218. The LRR 3; degenerate repeat unit spans residues alanine 219–arginine 246. The LRR 4; degenerate repeat unit spans residues phenylalanine 247–arginine 282. LRR repeat units follow at residues phenylalanine 283–leucine 307, glutamine 308–lysine 339, lysine 340–leucine 360, alanine 364–glutamine 391, and cysteine 392–aspartate 416.

Belongs to the PRAME family. LRRC14 subfamily. In terms of assembly, interacts with IKBKB; disrupts IKBKB-IKBKG interaction preventing I-kappa-B-kinase (IKK) core complex formation and leading to a decrease of IKBKB phosphorylation and NF-kappaB activation. Interacts with CHUK.

The protein resides in the cytoplasm. Functionally, negatively regulates Toll-like receptor-mediated NF-kappa-B signaling by disrupting IKK core complex formation through interaction with IKBKB. This chain is Leucine-rich repeat-containing protein 14, found in Homo sapiens (Human).